The sequence spans 421 residues: Histidine--tRNA ligase (421 aa).

It belongs to the class-II aminoacyl-tRNA synthetase family. As to quaternary structure, homodimer.

It is found in the cytoplasm. It catalyses the reaction tRNA(His) + L-histidine + ATP = L-histidyl-tRNA(His) + AMP + diphosphate + H(+). This chain is Histidine--tRNA ligase, found in Francisella tularensis subsp. holarctica (strain OSU18).